A 354-amino-acid chain; its full sequence is Dye-decolorizing peroxidase (354 aa).

The Proton acceptor role is filled by Asp-165. His-238 is a heme binding site. Residues 312-335 (GLFFSPTVDFLDDPPPLPAPGTPA) form a targeting peptide region. Residues 324 to 337 (DPPPLPAPGTPAAP) are compositionally biased toward pro residues. The segment at 324 to 354 (DPPPLPAPGTPAAPPARNGSLSIGSLKGTTR) is disordered. The span at 342 to 354 (GSLSIGSLKGTTR) shows a compositional bias: polar residues.

It belongs to the DyP-type peroxidase family. As to quaternary structure, found in a complex with type 1 encapsulin, strongly suggesting it is found in a type 1 encapsulin nanocompartment. Homotetramer, presumably also in the type 1 encapsulin nanocompartment. The cofactor is heme b.

The protein resides in the encapsulin nanocompartment. Its subcellular location is the cell membrane. The enzyme catalyses 2 a phenolic donor + H2O2 = 2 a phenolic radical donor + 2 H2O. Its function is as follows. Cargo protein of a type 1 encapsulin nanocompartment. A heme-dependent peroxidase. This cargo-loaded encapsulin nanocompartment is probably involved in protection against oxidative damage. In Mycolicibacterium paratuberculosis (strain ATCC BAA-968 / K-10) (Mycobacterium paratuberculosis), this protein is Dye-decolorizing peroxidase.